A 366-amino-acid chain; its full sequence is Phospho-N-acetylmuramoyl-pentapeptide-transferase (366 aa).

The next 10 membrane-spanning stretches (helical) occupy residues 27–47 (AALF…INSL), 71–91 (TPTM…LLWA), 93–113 (LSNV…AIGF), 134–154 (LGIE…TALA), 174–194 (FLIN…VGAG), 205–225 (GLAI…AYLA), 245–265 (LAVV…FNAP), 268–288 (AIFM…TVAV), 294–314 (IVMA…IIQV), and 343–363 (QVVI…LSTL).

This sequence belongs to the glycosyltransferase 4 family. MraY subfamily. Mg(2+) is required as a cofactor.

It is found in the cell inner membrane. It carries out the reaction UDP-N-acetyl-alpha-D-muramoyl-L-alanyl-gamma-D-glutamyl-meso-2,6-diaminopimeloyl-D-alanyl-D-alanine + di-trans,octa-cis-undecaprenyl phosphate = di-trans,octa-cis-undecaprenyl diphospho-N-acetyl-alpha-D-muramoyl-L-alanyl-D-glutamyl-meso-2,6-diaminopimeloyl-D-alanyl-D-alanine + UMP. It functions in the pathway cell wall biogenesis; peptidoglycan biosynthesis. In terms of biological role, catalyzes the initial step of the lipid cycle reactions in the biosynthesis of the cell wall peptidoglycan: transfers peptidoglycan precursor phospho-MurNAc-pentapeptide from UDP-MurNAc-pentapeptide onto the lipid carrier undecaprenyl phosphate, yielding undecaprenyl-pyrophosphoryl-MurNAc-pentapeptide, known as lipid I. This Rhizobium etli (strain CIAT 652) protein is Phospho-N-acetylmuramoyl-pentapeptide-transferase.